Reading from the N-terminus, the 90-residue chain is Small ribosomal subunit protein uS15 (90 aa).

The protein belongs to the universal ribosomal protein uS15 family. In terms of assembly, part of the 30S ribosomal subunit. Forms a bridge to the 50S subunit in the 70S ribosome, contacting the 23S rRNA.

One of the primary rRNA binding proteins, it binds directly to 16S rRNA where it helps nucleate assembly of the platform of the 30S subunit by binding and bridging several RNA helices of the 16S rRNA. Its function is as follows. Forms an intersubunit bridge (bridge B4) with the 23S rRNA of the 50S subunit in the ribosome. The sequence is that of Small ribosomal subunit protein uS15 from Blochmanniella floridana.